The sequence spans 211 residues: uncharacterized protein (211 aa).

Transmembrane regions (helical) follow at residues 21-38 (WYVI…ASEI), 53-75 (WGMD…YAAV), 82-104 (TAYL…MGVA), 124-146 (IFYA…AANV), 159-178 (PLLI…YWVY), and 188-210 (AVSF…LMEW).

It localises to the cell membrane. This is an uncharacterized protein from Archaeoglobus fulgidus (strain ATCC 49558 / DSM 4304 / JCM 9628 / NBRC 100126 / VC-16).